The primary structure comprises 501 residues: MKFKADEISSIIKERIENFDLNLEIEETGKIISVADGVAKVYGLKNIMAGEMVEFENGDKGMALNLEESSVGIVILGKGEGLKEGASVKRLKKLLKVPVGEALIGRVVNALGEPIDAKGVVNANEYRFVEEKAKGIMARKSVHEPLHTGIKAIDALVPIGRGQRELIIGDRQTGKTTVAVDTIISQRGQGVICIYVAIGQKQSTVAQVVKRLEEHGAMEYTIVVNAGASDPAALQYLAPYAGVTMGEFFRDNAKHALIVYDDLSKHAVAYREMSLILRRPPGREAYPGDVFYLHSRLLERASKLNDELGAGSLTALPIIETQAGDVSAYIPTNVISITDGQIFLETDLFNSGIRPAINVGLSVSRVGGAAQIKATKQVSGTLRLDLAQYRELQAFTQFASDLDEASRKQLERGQRMVELLKQPPYSPLSVEKQVVLIFAGTKGFLDDIAVSRIKEFEDGIYPFIEAKHPDIFEQIRSKKALDSDLEEKLAKAINEFKANHL.

169-176 (GDRQTGKT) provides a ligand contact to ATP.

It belongs to the ATPase alpha/beta chains family. In terms of assembly, F-type ATPases have 2 components, CF(1) - the catalytic core - and CF(0) - the membrane proton channel. CF(1) has five subunits: alpha(3), beta(3), gamma(1), delta(1), epsilon(1). CF(0) has three main subunits: a(1), b(2) and c(9-12). The alpha and beta chains form an alternating ring which encloses part of the gamma chain. CF(1) is attached to CF(0) by a central stalk formed by the gamma and epsilon chains, while a peripheral stalk is formed by the delta and b chains.

The protein localises to the cell inner membrane. The catalysed reaction is ATP + H2O + 4 H(+)(in) = ADP + phosphate + 5 H(+)(out). Produces ATP from ADP in the presence of a proton gradient across the membrane. The alpha chain is a regulatory subunit. This is ATP synthase subunit alpha from Campylobacter jejuni subsp. doylei (strain ATCC BAA-1458 / RM4099 / 269.97).